A 489-amino-acid polypeptide reads, in one-letter code: UDP-N-acetylmuramate--L-alanine ligase (489 aa).

Residue 128–134 (GTHGKTT) participates in ATP binding.

It belongs to the MurCDEF family.

The protein localises to the cytoplasm. It catalyses the reaction UDP-N-acetyl-alpha-D-muramate + L-alanine + ATP = UDP-N-acetyl-alpha-D-muramoyl-L-alanine + ADP + phosphate + H(+). Its pathway is cell wall biogenesis; peptidoglycan biosynthesis. Cell wall formation. In Shewanella pealeana (strain ATCC 700345 / ANG-SQ1), this protein is UDP-N-acetylmuramate--L-alanine ligase.